Reading from the N-terminus, the 445-residue chain is Phosphoglucosamine mutase (445 aa).

Catalysis depends on Ser99, which acts as the Phosphoserine intermediate. The Mg(2+) site is built by Ser99, Asp242, Asp244, and Asp246. Ser99 carries the phosphoserine modification.

Belongs to the phosphohexose mutase family. It depends on Mg(2+) as a cofactor. In terms of processing, activated by phosphorylation.

It catalyses the reaction alpha-D-glucosamine 1-phosphate = D-glucosamine 6-phosphate. In terms of biological role, catalyzes the conversion of glucosamine-6-phosphate to glucosamine-1-phosphate. This is Phosphoglucosamine mutase from Campylobacter jejuni subsp. jejuni serotype O:2 (strain ATCC 700819 / NCTC 11168).